Here is a 349-residue protein sequence, read N- to C-terminus: Cyclic AMP-dependent transcription factor ATF-4 (349 aa).

Disordered stretches follow at residues 49–75 (FSSD…TGKE), 204–271 (PPCV…TAKV), and 279–298 (KLKK…QKKR). P60 is modified (4-hydroxyproline). Position 212 is a phosphothreonine (T212). Phosphoserine occurs at positions 214, 218, 223, 230, and 234. The BetaTrCP degron motif signature appears at 214–223 (SDNDSGICMS). Positions 229 to 239 (GSPQHSPSTSR) are enriched in polar residues. P235 carries the post-translational modification 4-hydroxyproline. Position 247 is a phosphoserine (S247). S251 is modified (phosphoserine; by RPS6KA3). Residues K258 and K270 each participate in a glycyl lysine isopeptide (Lys-Gly) (interchain with G-Cter in SUMO2) cross-link. Residues 276–339 (LDKKLKKMEQ…QYLKDLIEEV (64 aa)) enclose the bZIP domain. Residues 278-298 (KKLKKMEQNKTAATRYRQKKR) form a basic motif region. The interaction with GABBR1 stretch occupies residues 303 to 339 (ALTGECKELEKKNEALKEKADSLAKEIQYLKDLIEEV). Positions 304–332 (LTGECKELEKKNEALKEKADSLAKEIQYL) are leucine-zipper. K309 bears the N6-acetyllysine mark.

The protein belongs to the bZIP family. Binds DNA as a homodimer and as a heterodimer. Heterodimer; heterodimerizes with CEBPB. Heterodimer; heterodimerizes with DDIT3/CHOP. Interacts with CEP290 (via an N-terminal region). Interacts with NEK6, DAPK2 (isoform 2) and ZIPK/DAPK3. Interacts (via its leucine zipper domain) with GABBR1 and GABBR2 (via their C-termini). Forms a heterodimer with TXLNG in osteoblasts. Interacts (via its DNA binding domain) with FOXO1 (C-terminal half); the interaction occurs in osteoblasts and regulates glucose homeostasis through suppression of beta-cell proliferation and a decrease in insulin production. Interacts with SATB2; the interaction results in enhanced DNA binding and transactivation by these transcription factors. Interacts with ABRAXAS2. Interacts with TRIB3, inhibiting the transactivation activity of ATF4. Interacts with DISC1; which inhibits ATF4 transcription factor activity by disrupting ATF4 dimerization and DNA-binding. Interacts with EP300/p300; EP300/p300 stabilizes ATF4 and increases its transcriptional activity independently of its catalytic activity by preventing its ubiquitination. In terms of processing, ubiquitinated by SCF(BTRC) in response to mTORC1 signal, followed by proteasomal degradation and leading to down-regulate expression of SIRT4. Interaction with EP300/p300 inhibits ubiquitination by SCF(BTRC). Phosphorylation at Ser-251 by RPS6KA3/RSK2 in osteoblasts enhances transactivation activity and promotes osteoblast differentiation. Phosphorylated on the betaTrCP degron motif at Ser-218, followed by phosphorylation at Thr-212, Ser-223, Ser-230, Ser-234 and Ser-247, promoting interaction with BTRC and ubiquitination. Phosphorylation is promoted by mTORC1. Phosphorylation at Ser-214 by CK2 decreases its stability. Phosphorylated by NEK6. Post-translationally, hydroxylated by PHD3, leading to decreased protein stability. Ubiquitously expressed in adults.

It is found in the nucleus. Its subcellular location is the nucleus speckle. The protein resides in the cytoplasm. It localises to the cell membrane. The protein localises to the cytoskeleton. It is found in the microtubule organizing center. Its subcellular location is the centrosome. Transcription factor that binds the cAMP response element (CRE) (consensus: 5'-GTGACGT[AC][AG]-3') and displays two biological functions, as regulator of metabolic and redox processes under normal cellular conditions, and as master transcription factor during integrated stress response (ISR). Binds to asymmetric CRE's as a heterodimer and to palindromic CRE's as a homodimer. Core effector of the ISR, which is required for adaptation to various stress such as endoplasmic reticulum (ER) stress, amino acid starvation, mitochondrial stress or oxidative stress. During ISR, ATF4 translation is induced via an alternative ribosome translation re-initiation mechanism in response to EIF2S1/eIF-2-alpha phosphorylation, and stress-induced ATF4 acts as a master transcription factor of stress-responsive genes in order to promote cell recovery. Promotes the transcription of genes linked to amino acid sufficiency and resistance to oxidative stress to protect cells against metabolic consequences of ER oxidation. Activates the transcription of NLRP1, possibly in concert with other factors in response to ER stress. Activates the transcription of asparagine synthetase (ASNS) in response to amino acid deprivation or ER stress. However, when associated with DDIT3/CHOP, the transcriptional activation of the ASNS gene is inhibited in response to amino acid deprivation. Together with DDIT3/CHOP, mediates programmed cell death by promoting the expression of genes involved in cellular amino acid metabolic processes, mRNA translation and the terminal unfolded protein response (terminal UPR), a cellular response that elicits programmed cell death when ER stress is prolonged and unresolved. Activates the expression of COX7A2L/SCAF1 downstream of the EIF2AK3/PERK-mediated unfolded protein response, thereby promoting formation of respiratory chain supercomplexes and increasing mitochondrial oxidative phosphorylation. Together with DDIT3/CHOP, activates the transcription of the IRS-regulator TRIB3 and promotes ER stress-induced neuronal cell death by regulating the expression of BBC3/PUMA in response to ER stress. May cooperate with the UPR transcriptional regulator QRICH1 to regulate ER protein homeostasis which is critical for cell viability in response to ER stress. In the absence of stress, ATF4 translation is at low levels and it is required for normal metabolic processes such as embryonic lens formation, fetal liver hematopoiesis, bone development and synaptic plasticity. Acts as a regulator of osteoblast differentiation in response to phosphorylation by RPS6KA3/RSK2: phosphorylation in osteoblasts enhances transactivation activity and promotes expression of osteoblast-specific genes and post-transcriptionally regulates the synthesis of Type I collagen, the main constituent of the bone matrix. Cooperates with FOXO1 in osteoblasts to regulate glucose homeostasis through suppression of beta-cell production and decrease in insulin production. Activates transcription of SIRT4. Regulates the circadian expression of the core clock component PER2 and the serotonin transporter SLC6A4. Binds in a circadian time-dependent manner to the cAMP response elements (CRE) in the SLC6A4 and PER2 promoters and periodically activates the transcription of these genes. Mainly acts as a transcriptional activator in cellular stress adaptation, but it can also act as a transcriptional repressor: acts as a regulator of synaptic plasticity by repressing transcription, thereby inhibiting induction and maintenance of long-term memory. Regulates synaptic functions via interaction with DISC1 in neurons, which inhibits ATF4 transcription factor activity by disrupting ATF4 dimerization and DNA-binding. This Mus musculus (Mouse) protein is Cyclic AMP-dependent transcription factor ATF-4.